The chain runs to 217 residues: TLD domain-containing protein 2 (217 aa).

Residues 1 to 48 (MKSLRWRYTRLPSQVEDALSGEEDKEEEEEKEEETTPAPTPVPEHPMV) form a disordered region. Acidic residues predominate over residues 19 to 35 (LSGEEDKEEEEEKEEET). The 162-residue stretch at 56–217 (QVLGASEMSQ…ISELEAWVLS (162 aa)) folds into the TLDc domain.

The protein belongs to the OXR1 family.

The polypeptide is TLD domain-containing protein 2 (TLDC2) (Bos taurus (Bovine)).